A 472-amino-acid polypeptide reads, in one-letter code: MTRVLSVASECAPLVKTGGLADVVGALPGAMAALGDELRTLVPGYATMPVVGGAVVAAFDDLFGGPATVDALTHEGLDLLILRAPHLFDRPGGLYIDAFGADWPDNAERFAALSYAAAHVAAKGAGDWRADVVHGHDWQAGLVPEYLAGLGCDTPFILTIHNVAFHGNTGAEKLDALRLDPDRFNADQYEFWGQISALKAGLMGAAQITTVSQTYAEELMTPQFGMGMDGVLRHRRDALTGIVNGIDLDVWNPETDPQITPYTTFKGKAANKAALQAEFGLSKAPGPLCVLVSRLTDQKGIDLLLDAMHVVLERGGQVAVLGSGAPDLEVCLLERADAEPNLAVKIGYDEALSHRMMAGGDCILVPSRFEPCGLTQLYGLRYGTLPLVALTGGLADTVINASPAALARRVATGIQFSPITAEALANAFSRLCDLYADRKTWTAMVRNAMKQPVGWDMSASRYHALYKATARK.

Lysine 16 contributes to the ADP-alpha-D-glucose binding site.

Belongs to the glycosyltransferase 1 family. Bacterial/plant glycogen synthase subfamily.

The catalysed reaction is [(1-&gt;4)-alpha-D-glucosyl](n) + ADP-alpha-D-glucose = [(1-&gt;4)-alpha-D-glucosyl](n+1) + ADP + H(+). It functions in the pathway glycan biosynthesis; glycogen biosynthesis. Its function is as follows. Synthesizes alpha-1,4-glucan chains using ADP-glucose. This is Glycogen synthase from Jannaschia sp. (strain CCS1).